The following is a 33-amino-acid chain: rho operon leader peptide (33 aa).

The span at 1–25 shows a compositional bias: polar residues; the sequence is MRSEQISGSSLNPSCRFSSAYSPVT. The segment at 1–33 is disordered; it reads MRSEQISGSSLNPSCRFSSAYSPVTRQRKDMSR.

The chain is rho operon leader peptide (rhoL) from Escherichia coli O157:H7.